Consider the following 122-residue polypeptide: Large ribosomal subunit protein uL14 (122 aa).

It belongs to the universal ribosomal protein uL14 family. As to quaternary structure, part of the 50S ribosomal subunit. Forms a cluster with proteins L3 and L19. In the 70S ribosome, L14 and L19 interact and together make contacts with the 16S rRNA in bridges B5 and B8.

Its function is as follows. Binds to 23S rRNA. Forms part of two intersubunit bridges in the 70S ribosome. The protein is Large ribosomal subunit protein uL14 of Kosmotoga olearia (strain ATCC BAA-1733 / DSM 21960 / TBF 19.5.1).